The sequence spans 143 residues: Agaricus bisporus lectin (143 aa).

Residues Ala-29, Ser-48, Gly-49, and Asn-73 each contribute to the beta-D-Gal-(1-&gt;3)-alpha-D-GalNAc site. The N-acetyl-beta-D-glucosamine site is built by Thr-82, Arg-103, and Tyr-114.

It belongs to the fungal fruit body lectin family. Homotetramer.

In terms of biological role, lectin that recognizes O-linked galactose-beta-1,3-N-acetylgalactosamine, a disaccharide (Thomsen-Friedenreich antigen or T-disaccharide), present on cell surface glycoproteins. Can also bind galactose-beta-1,3-N-acetylglucosamine. Does not bind monosaccharides. Can be internalized by clathrin-coated vesicles after binding to surface glycoproteins. After internalization it inhibits nuclear import of nuclear localization signal dependent proteins. Inhibits proliferation of malignant cells without cytotoxicity for normal cells. The chain is Agaricus bisporus lectin from Agaricus bisporus (White button mushroom).